The primary structure comprises 74 residues: ATP synthase subunit 9, mitochondrial (74 aa).

Helical transmembrane passes span 8–28 (IGAG…GNVF) and 50–70 (ILGF…AFLI).

It belongs to the ATPase C chain family. F-type ATPases have 2 components, CF(1) - the catalytic core - and CF(0) - the membrane proton channel. CF(1) has five subunits: alpha(3), beta(3), gamma(1), delta(1), epsilon(1). CF(0) has three main subunits: a, b and c.

The protein resides in the mitochondrion membrane. In terms of biological role, this protein is one of the chains of the nonenzymatic membrane component (F0) of mitochondrial ATPase. This Triticum aestivum (Wheat) protein is ATP synthase subunit 9, mitochondrial (ATP9).